The sequence spans 251 residues: B3 domain-containing protein REM7 (251 aa).

DNA-binding regions (TF-B3) lie at residues asparagine 11 to serine 103 and cysteine 170 to asparagine 251.

The protein resides in the nucleus. This Arabidopsis thaliana (Mouse-ear cress) protein is B3 domain-containing protein REM7 (REM7).